Reading from the N-terminus, the 250-residue chain is Putative apoptosis inhibitor ORF99 (250 aa).

The stretch at 13 to 78 (RVNSFGGWSK…KFSGDCLYLK (66 aa)) is one BIR repeat.

May act as an apoptosis inhibitor. This is Putative apoptosis inhibitor ORF99 from Ostreid herpesvirus 1 (isolate France) (OsHV-1).